We begin with the raw amino-acid sequence, 258 residues long: Myogenic factor 5 (258 aa).

The disordered stretch occupies residues 21–50 (LSSPEGEFPEDFEPRELPPFGAPAPTEPAC). One can recognise a bHLH domain in the interval 85–136 (DRRKAATMRERRRLKKVNQAFETLKRCTTANPNQRLPKVEILRNAIRYIESL). Positions 220 to 258 (AEEPGLPLRHAGSLSPGASIDSGPGTPGSPPPRRTYQAL) are disordered.

Efficient DNA binding requires dimerization with another bHLH protein.

It localises to the nucleus. Functionally, acts as a transcriptional activator that promotes transcription of muscle-specific target genes and plays a role in muscle differentiation. Induces fibroblasts to differentiate into myoblasts. Probable sequence specific DNA-binding protein. The chain is Myogenic factor 5 (MYF5) from Gallus gallus (Chicken).